A 380-amino-acid polypeptide reads, in one-letter code: 1-deoxy-D-xylulose 5-phosphate reductoisomerase (380 aa).

Positions 10, 11, 12, 13, 36, 37, 38, and 120 each coordinate NADPH. Residue Lys121 coordinates 1-deoxy-D-xylulose 5-phosphate. Glu122 provides a ligand contact to NADPH. Asp146 provides a ligand contact to Mn(2+). Residues Ser147, Glu148, Ser172, and His195 each contribute to the 1-deoxy-D-xylulose 5-phosphate site. Glu148 provides a ligand contact to Mn(2+). Residue Gly201 coordinates NADPH. 1-deoxy-D-xylulose 5-phosphate is bound by residues Ser208, Asn213, Lys214, and Glu217. Glu217 is a Mn(2+) binding site.

Belongs to the DXR family. Mg(2+) serves as cofactor. The cofactor is Mn(2+).

It carries out the reaction 2-C-methyl-D-erythritol 4-phosphate + NADP(+) = 1-deoxy-D-xylulose 5-phosphate + NADPH + H(+). It functions in the pathway isoprenoid biosynthesis; isopentenyl diphosphate biosynthesis via DXP pathway; isopentenyl diphosphate from 1-deoxy-D-xylulose 5-phosphate: step 1/6. Catalyzes the NADPH-dependent rearrangement and reduction of 1-deoxy-D-xylulose-5-phosphate (DXP) to 2-C-methyl-D-erythritol 4-phosphate (MEP). This Listeria monocytogenes serotype 4a (strain HCC23) protein is 1-deoxy-D-xylulose 5-phosphate reductoisomerase.